Reading from the N-terminus, the 90-residue chain is Small ribosomal subunit protein uS17 (90 aa).

Belongs to the universal ribosomal protein uS17 family. In terms of assembly, part of the 30S ribosomal subunit.

One of the primary rRNA binding proteins, it binds specifically to the 5'-end of 16S ribosomal RNA. This Methylobacillus flagellatus (strain ATCC 51484 / DSM 6875 / VKM B-1610 / KT) protein is Small ribosomal subunit protein uS17.